The following is a 226-amino-acid chain: UPF0758 protein PsycPRwf_0491 (226 aa).

One can recognise an MPN domain in the interval 102–224 (SLNRSQVVKD…TLSFAETATA (123 aa)). Residues H173, H175, and D186 each contribute to the Zn(2+) site. The JAMM motif motif lies at 173–186 (HNHPNQDATPSAAD).

Belongs to the UPF0758 family.

The chain is UPF0758 protein PsycPRwf_0491 from Psychrobacter sp. (strain PRwf-1).